The following is a 540-amino-acid chain: Chaperonin GroEL 1 (540 aa).

ATP is bound by residues 30-33, K51, 87-91, G415, 480-482, and D496; these read TLGP, DGTTT, and NAA.

This sequence belongs to the chaperonin (HSP60) family. As to quaternary structure, forms a cylinder of 14 subunits composed of two heptameric rings stacked back-to-back. Interacts with the co-chaperonin GroES.

It localises to the cytoplasm. The catalysed reaction is ATP + H2O + a folded polypeptide = ADP + phosphate + an unfolded polypeptide.. In terms of biological role, together with its co-chaperonin GroES, plays an essential role in assisting protein folding. The GroEL-GroES system forms a nano-cage that allows encapsulation of the non-native substrate proteins and provides a physical environment optimized to promote and accelerate protein folding. In Bradyrhizobium diazoefficiens (strain JCM 10833 / BCRC 13528 / IAM 13628 / NBRC 14792 / USDA 110), this protein is Chaperonin GroEL 1.